The primary structure comprises 160 residues: Small ribosomal subunit protein bS6 (160 aa).

A disordered region spans residues 100-160 (PSSVLARKSD…DDARETAGAE (61 aa)). Basic and acidic residues-rich tracts occupy residues 106–116 (RKSDDRGDRGN) and 136–160 (RSSE…AGAE).

This sequence belongs to the bacterial ribosomal protein bS6 family.

Functionally, binds together with bS18 to 16S ribosomal RNA. The chain is Small ribosomal subunit protein bS6 from Gluconobacter oxydans (strain 621H) (Gluconobacter suboxydans).